A 426-amino-acid polypeptide reads, in one-letter code: Glutamate-1-semialdehyde 2,1-aminomutase (426 aa).

An N6-(pyridoxal phosphate)lysine modification is found at Lys-268.

This sequence belongs to the class-III pyridoxal-phosphate-dependent aminotransferase family. HemL subfamily. The cofactor is pyridoxal 5'-phosphate.

Its subcellular location is the cytoplasm. It catalyses the reaction (S)-4-amino-5-oxopentanoate = 5-aminolevulinate. It participates in porphyrin-containing compound metabolism; protoporphyrin-IX biosynthesis; 5-aminolevulinate from L-glutamyl-tRNA(Glu): step 2/2. This Saccharolobus islandicus (strain M.16.27) (Sulfolobus islandicus) protein is Glutamate-1-semialdehyde 2,1-aminomutase.